Reading from the N-terminus, the 389-residue chain is Large envelope protein (389 aa).

Position 1 is an N-acetylmethionine (Met1). Gly2 carries the N-myristoyl glycine; by host lipid modification. The interval 2–108 (GQNLSTSNPL…PPLRNTHPQA (107 aa)) is pre-S1. The pre-S stretch occupies residues 2-163 (GQNLSTSNPL…FSRIGDPALN (162 aa)). Residues 2–170 (GQNLSTSNPL…ALNMENITSG (169 aa)) are Virion surface; in external conformation-facing. Topologically, residues 2-242 (GQNLSTSNPL…PGYRWMCLRR (241 aa)) are intravirion; in internal conformation. Residues 76 to 103 (TLPANPPPASTNRQSGRQPTPLSPPLRN) form a disordered region. Over residues 85-95 (STNRQSGRQPT) the composition is skewed to polar residues. The segment at 109-163 (MQWNSTTFHQTLQDPRVRGLYLPAGGSSSGTVNPVPTTVSPISSIFSRIGDPALN) is pre-S2. Residues 171–191 (FLGPLLVLQAGFFLLTKILTI) traverse the membrane as a helical segment. At 192-242 (PKSLDSWWTSLNFLGGTTVCLGQNSQSPTSNHSPTSCPPTCPGYRWMCLRR) the chain is on the intravirion; in external conformation side. A helical membrane pass occupies residues 243 to 263 (FIIFLFILLLCLIFLLVLLDY). The Virion surface portion of the chain corresponds to 264–337 (QGMLPVCPLI…WASARFSWLS (74 aa)). Asn309 is a glycosylation site (N-linked (GlcNAc...) asparagine; by host). The chain crosses the membrane as a helical span at residues 338-358 (LLVPFVQWFVGLSPTVWLLVI). Topologically, residues 359-364 (WMMWYW) are intravirion. The helical transmembrane segment at 365–387 (GPKLFTILSPFLPLLPIFFCLWV) threads the bilayer. Topologically, residues 388 to 389 (YI) are virion surface.

It belongs to the orthohepadnavirus major surface antigen family. As to quaternary structure, in its internal form (Li-HBsAg), interacts with the capsid protein and with the isoform S. Interacts with host chaperone CANX. In terms of assembly, associates with host chaperone CANX through its pre-S2 N glycan; this association may be essential for isoform M proper secretion. Interacts with isoform L. Interacts with the antigens of satellite virus HDV (HDVAgs); this interaction is required for encapsidation of HDV genomic RNA. Isoform M is N-terminally acetylated by host at a ratio of 90%, and N-glycosylated by host at the pre-S2 region. Post-translationally, myristoylated.

It localises to the virion membrane. Functionally, the large envelope protein exists in two topological conformations, one which is termed 'external' or Le-HBsAg and the other 'internal' or Li-HBsAg. In its external conformation the protein attaches the virus to cell receptors and thereby initiating infection. This interaction determines the species specificity and liver tropism. This attachment induces virion internalization predominantly through caveolin-mediated endocytosis. The large envelope protein also assures fusion between virion membrane and endosomal membrane. In its internal conformation the protein plays a role in virion morphogenesis and mediates the contact with the nucleocapsid like a matrix protein. Its function is as follows. The middle envelope protein plays an important role in the budding of the virion. It is involved in the induction of budding in a nucleocapsid independent way. In this process the majority of envelope proteins bud to form subviral lipoprotein particles of 22 nm of diameter that do not contain a nucleocapsid. This chain is Large envelope protein, found in Homo sapiens (Human).